Here is a 293-residue protein sequence, read N- to C-terminus: MSEELENKFLDLCHKYPTGLTQQMIEVSLGHKMEEIVKVINNLIKQGRLMLIQNSDETTSYKEVNPEDQAKFRGLGVEDFLIYQLIEASSNTGAWTRELKNSSGYQQVQITKILKTLESRKLIKSVKSIQSGRKKVYMLYNMEPSREITGGQLYSDQSYDHQYIQIMKMHIKTFVDNKGAVDLADIITYLRKVAEEATSQSLGPEDIQALVNTVIYDGDIEEMRDTRMGAMLGRRSGILYKPTKTPIPVNNFCNMPCGNCPVFDICSDNGLVSPKRCVYFKQYLEQDDESLDF.

It belongs to the eukaryotic RPC34/RPC39 RNA polymerase subunit family. In terms of assembly, component of the RNA polymerase III (Pol III) complex.

Its subcellular location is the nucleus. In terms of biological role, DNA-dependent RNA polymerase catalyzes the transcription of DNA into RNA using the four ribonucleoside triphosphates as substrates. Specific peripheric component of RNA polymerase III which synthesizes small RNAs, such as 5S rRNA and tRNAs. May direct RNA Pol III binding to the TFIIIB-DNA complex. This Dictyostelium discoideum (Social amoeba) protein is DNA-directed RNA polymerase III subunit rpc6 (polr3f).